A 203-amino-acid polypeptide reads, in one-letter code: MAKNIAKALLDIEAVSLSPNDLFTWSSGIKSPIYCDNRITLGYPEVRNAIRDGLIQLIKEHFSNVEIISGTATAGIPHAAYISEKMELPMNYVRSKSKSHGKQNQIEGAKSENKNVVVVEDLISTGGSSITAVEALEEAGANVLGVVAIFTYGLAKADETFNKAHIPFYTLSDYNELIEVAKDDGKISLNDIQTLVDWRDNLS.

5-phospho-alpha-D-ribose 1-diphosphate is bound by residues Arg-94, Lys-98, His-100, and 120-128 (EDLISTGGS). Residue Ser-124 participates in orotate binding.

It belongs to the purine/pyrimidine phosphoribosyltransferase family. PyrE subfamily. In terms of assembly, homodimer. Requires Mg(2+) as cofactor.

The catalysed reaction is orotidine 5'-phosphate + diphosphate = orotate + 5-phospho-alpha-D-ribose 1-diphosphate. The protein operates within pyrimidine metabolism; UMP biosynthesis via de novo pathway; UMP from orotate: step 1/2. Functionally, catalyzes the transfer of a ribosyl phosphate group from 5-phosphoribose 1-diphosphate to orotate, leading to the formation of orotidine monophosphate (OMP). The polypeptide is Orotate phosphoribosyltransferase (Staphylococcus epidermidis (strain ATCC 35984 / DSM 28319 / BCRC 17069 / CCUG 31568 / BM 3577 / RP62A)).